We begin with the raw amino-acid sequence, 503 residues long: Cytochrome P450 3A17 (503 aa).

Cys442 contributes to the heme binding site.

This sequence belongs to the cytochrome P450 family. Heme is required as a cofactor.

It localises to the endoplasmic reticulum membrane. The protein localises to the microsome membrane. It catalyses the reaction an organic molecule + reduced [NADPH--hemoprotein reductase] + O2 = an alcohol + oxidized [NADPH--hemoprotein reductase] + H2O + H(+). Functionally, cytochromes P450 are a group of heme-thiolate monooxygenases. In liver microsomes, this enzyme is involved in an NADPH-dependent electron transport pathway. It oxidizes a variety of structurally unrelated compounds, including steroids, fatty acids, and xenobiotics. This chain is Cytochrome P450 3A17 (CYP3A17), found in Cavia porcellus (Guinea pig).